An 82-amino-acid chain; its full sequence is MFHTKQSEEGCSPLMPNLAAAVPCRPFVNLARETGTTNLLVAGSRPTNTGVRNFVINLTVGESSSSRRTANRILLRSFTSLL.

This is an uncharacterized protein from Human herpesvirus 6A (strain Uganda-1102) (HHV-6 variant A).